Reading from the N-terminus, the 510-residue chain is GMP synthase [glutamine-hydrolyzing] (510 aa).

The 191-residue stretch at 5–195 folds into the Glutamine amidotransferase type-1 domain; it reads TVVVLDFGGQ…LFEICGLRGD (191 aa). Catalysis depends on cysteine 82, which acts as the Nucleophile. Active-site residues include histidine 169 and glutamate 171. The GMPS ATP-PPase domain occupies 196-385; it reads WDLSDFISEA…LGIPAEILWR (190 aa). 223 to 229 is a binding site for ATP; it reads SGGVDSS.

As to quaternary structure, homodimer.

It carries out the reaction XMP + L-glutamine + ATP + H2O = GMP + L-glutamate + AMP + diphosphate + 2 H(+). It functions in the pathway purine metabolism; GMP biosynthesis; GMP from XMP (L-Gln route): step 1/1. Functionally, catalyzes the synthesis of GMP from XMP. The polypeptide is GMP synthase [glutamine-hydrolyzing] (Syntrophomonas wolfei subsp. wolfei (strain DSM 2245B / Goettingen)).